The chain runs to 366 residues: Protein lifeguard 1 (366 aa).

Positions 1-141 (MSHEKSFLVS…GPPSYYDNQD (141 aa)) are disordered. 2 stretches are compositionally biased toward pro residues: residues 14–44 (YPPPNPGYPGGPQPSMAPYPGAPYPQAPFQP) and 67–109 (GPYP…PNPY). The next 7 membrane-spanning stretches (helical) occupy residues 160–180 (VFLVLTLQLSVTLSTVAVFTF), 192–212 (VWTYYVSYAIFFVSLIVLSCC), 223–243 (LVALSILTVSLSYMVGMIASF), 248–268 (AVIMAVGITTTVCFTVVIFSM), 278–298 (VGVLLVSVVVLILFAILCIFI), 302–322 (VLEIVYASLGALLFTCFLAVD), and 341–361 (FAALNLYTDIINIFLYILTII).

It belongs to the BI1 family. LFG subfamily.

It localises to the membrane. In terms of biological role, potential apoptotic regulator. The sequence is that of Protein lifeguard 1 (GRINA) from Bos taurus (Bovine).